The chain runs to 596 residues: Clathrin heavy chain linker domain-containing protein 1 (596 aa).

Residues 129 to 241 adopt a coiled-coil conformation; that stretch reads QLEAKMRIIE…RDIAENLKKD (113 aa).

The protein is Clathrin heavy chain linker domain-containing protein 1 (Clhc1) of Mus musculus (Mouse).